The sequence spans 314 residues: Peroxisome biogenesis factor 10 (314 aa).

Over 1 to 7 (MNTYVAE) the chain is Peroxisomal matrix. A helical membrane pass occupies residues 8–37 (IGEIVRSQRRDEEYIEDITERLSRVSKELL). G38 is a topological domain (cytoplasmic). A helical membrane pass occupies residues 39–60 (QRTWIRWFPYLKSIASTLYYTS). The Peroxisomal matrix segment spans residues 61 to 90 (TVVLGNQTLGEEYVHLFESNGLERTVPSIP). The chain crosses the membrane as a helical span at residues 91–110 (SRISFVLLHSAFPLISNYLI). The Cytoplasmic segment spans residues 111 to 142 (QKAESTLTHPSTESFLGIPIRKNQKARQSFLD). A helical membrane pass occupies residues 143-166 (VFFWLRTKLFPQLQRAHIALFYIT). Topologically, residues 167-197 (GAYYSIARRFTGIRFLSASAHSDIPALKVYR) are peroxisomal matrix. A helical membrane pass occupies residues 198-218 (FLGYITLIQLAVSIGISLYSF). At 219–314 (LEQEKFNNKL…PRDVTPLLNL (96 aa)) the chain is on the cytoplasmic side. Zn(2+) is bound by residues C255, C258, C269, H271, C274, C277, C296, and C299. An RING-type zinc finger spans residues 255-300 (CSICLENKNPSALFCGHLFCWTCIQEHAVAATSSASTSSARCPQCR).

Belongs to the pex2/pex10/pex12 family. In terms of assembly, component of the PEX2-PEX10-PEX12 retrotranslocation channel.

The protein resides in the peroxisome membrane. The enzyme catalyses S-ubiquitinyl-[E2 ubiquitin-conjugating enzyme]-L-cysteine + [acceptor protein]-L-lysine = [E2 ubiquitin-conjugating enzyme]-L-cysteine + N(6)-ubiquitinyl-[acceptor protein]-L-lysine.. It participates in protein modification; protein ubiquitination. The E3 ubiquitin-protein ligase activity is stimulated by PEX12/prx-12. In terms of biological role, E3 ubiquitin-protein ligase component of a retrotranslocation channel required for peroxisome organization by mediating export of the PEX5/prx-5 receptor from peroxisomes to the cytosol, thereby promoting PEX5/prx-5 recycling. The retrotranslocation channel is composed of PEX2/prx-2, PEX10/prx-10 and PEX12/prx-12; each subunit contributing transmembrane segments that coassemble into an open channel that specifically allows the passage of PEX5/prx-5 through the peroxisomal membrane. PEX10/prx-10 also regulates PEX5 recycling by acting as a E3 ubiquitin-protein ligase. When PEX5/prx-5 recycling is compromised, PEX10/prx-10 catalyzes polyubiquitination of PEX5/prx-5 during its passage through the retrotranslocation channel, leading to its degradation. This Caenorhabditis elegans protein is Peroxisome biogenesis factor 10.